The following is a 339-amino-acid chain: Anthranilate phosphoribosyltransferase (339 aa).

5-phospho-alpha-D-ribose 1-diphosphate is bound by residues G81, 84-85, T89, 91-94, 109-117, and T121; these read GD, NIST, and KHGNRNLSS. G81 serves as a coordination point for anthranilate. Residue S93 coordinates Mg(2+). Residue N112 participates in anthranilate binding. An anthranilate-binding site is contributed by R167. The Mg(2+) site is built by D226 and E227.

It belongs to the anthranilate phosphoribosyltransferase family. In terms of assembly, homodimer. The cofactor is Mg(2+).

The enzyme catalyses N-(5-phospho-beta-D-ribosyl)anthranilate + diphosphate = 5-phospho-alpha-D-ribose 1-diphosphate + anthranilate. The protein operates within amino-acid biosynthesis; L-tryptophan biosynthesis; L-tryptophan from chorismate: step 2/5. Functionally, catalyzes the transfer of the phosphoribosyl group of 5-phosphorylribose-1-pyrophosphate (PRPP) to anthranilate to yield N-(5'-phosphoribosyl)-anthranilate (PRA). The protein is Anthranilate phosphoribosyltransferase of Ruegeria pomeroyi (strain ATCC 700808 / DSM 15171 / DSS-3) (Silicibacter pomeroyi).